Consider the following 273-residue polypeptide: Putative pyruvate, phosphate dikinase regulatory protein (273 aa).

149–156 (GPSRTSKT) provides a ligand contact to ADP.

This sequence belongs to the pyruvate, phosphate/water dikinase regulatory protein family. PDRP subfamily.

The catalysed reaction is N(tele)-phospho-L-histidyl/L-threonyl-[pyruvate, phosphate dikinase] + ADP = N(tele)-phospho-L-histidyl/O-phospho-L-threonyl-[pyruvate, phosphate dikinase] + AMP + H(+). It catalyses the reaction N(tele)-phospho-L-histidyl/O-phospho-L-threonyl-[pyruvate, phosphate dikinase] + phosphate + H(+) = N(tele)-phospho-L-histidyl/L-threonyl-[pyruvate, phosphate dikinase] + diphosphate. Functionally, bifunctional serine/threonine kinase and phosphorylase involved in the regulation of the pyruvate, phosphate dikinase (PPDK) by catalyzing its phosphorylation/dephosphorylation. This Rickettsia felis (strain ATCC VR-1525 / URRWXCal2) (Rickettsia azadi) protein is Putative pyruvate, phosphate dikinase regulatory protein.